A 253-amino-acid chain; its full sequence is Sporulation initiation inhibitor protein Soj (253 aa).

The ATP site is built by Lys-11, Gly-12, Gly-13, Val-14, Gly-15, Lys-16, Thr-17, Thr-18, Pro-214, and Asn-216. Thr-17 serves as a coordination point for Mg(2+).

The protein belongs to the ParA family. As to quaternary structure, dimerizes in the presence of ATP but not ADP; ATP-binding is required for double-stranded (ds)DNA-binding. Interacts with DnaA.

It is found in the cytoplasm. It catalyses the reaction ATP + H2O = ADP + phosphate + H(+). Its function is as follows. Acts as a spatially regulated molecular switch, capable of either inhibiting or activating the ability of DnaA to initiate DNA replication. Monomeric ADP-Soj inhibits oligomerization of DnaA on single-stranded (ss)- or double-stranded (ds)DNA, thus inhibiting DNA replication initiation; does not disassemble premade DnaA-DNA filaments. Decreases the residence time of DnaA on the chromosome at its binding sites (oriC, replication forks and (probably) promoter-binding sites). Soj forms nucleoprotein filaments in an ATP- and DNA-dependent manner. Inhibits the initiation of sporulation, Spo0J antagonizes this inhibition. Soj ultimately inhibits the activation (phosphorylation) of Spo0A. The polypeptide is Sporulation initiation inhibitor protein Soj (Bacillus subtilis (strain 168)).